The sequence spans 1025 residues: Dihydropyrimidine dehydrogenase [NADP(+)] (1025 aa).

In terms of domain architecture, 4Fe-4S ferredoxin-type 1 spans 69-100; the sequence is ERGALREAMRCLKCADAPCQKSCPTNLDIKSF. Cys79, Cys82, Cys87, and Cys91 together coordinate [4Fe-4S] cluster. Val129 serves as a coordination point for FAD. Positions 130, 136, 140, and 156 each coordinate [4Fe-4S] cluster. Residues 194–198, 218–226, Arg235, and Leu261 each bind FAD; these read GAGPA and EKQEYVGGI. Residues 340–343, 364–365, and Arg371 each bind NADP(+); these read AGDT and RK. Lys384 is modified (N6-acetyllysine). NADP(+) is bound by residues 437 to 439 and 481 to 487; these read AFG and DVVGIAN. 480 to 489 is an FAD binding site; sequence GDVVGIANTT. FMN contacts are provided by residues Ser550 and 574-575; that span reads KT. Substrate-binding positions include Asn609 and 668 to 670; that span reads NLS. Catalysis depends on Cys671, which acts as the Proton acceptor. Lys709 provides a ligand contact to FMN. Position 736–737 (736–737) interacts with substrate; the sequence is NT. Residues Gly767, 793-795, and 816-817 each bind FMN; these read TGG and CS. 4Fe-4S ferredoxin-type domains are found at residues 944-976 and 978-1007; these read VVAVIDEEMCINCGKCYMTCNDSGYQAIQFDPE and HLPTVTDTCTGCTLCLSVCPIIDCIKMVSR. [4Fe-4S] cluster contacts are provided by Cys953, Cys956, Cys959, Cys963, Cys986, Cys989, Cys992, and Cys996.

It belongs to the dihydropyrimidine dehydrogenase family. Homodimer. It depends on FAD as a cofactor. FMN serves as cofactor. Requires [4Fe-4S] cluster as cofactor.

The protein localises to the cytoplasm. It carries out the reaction 5,6-dihydrouracil + NADP(+) = uracil + NADPH + H(+). The catalysed reaction is 5,6-dihydrothymine + NADP(+) = thymine + NADPH + H(+). The protein operates within amino-acid biosynthesis; beta-alanine biosynthesis. Inactivated by 5-iodouracil. Its function is as follows. Involved in pyrimidine base degradation. Catalyzes the reduction of uracil and thymine. Also involved the degradation of the chemotherapeutic drug 5-fluorouracil. The protein is Dihydropyrimidine dehydrogenase [NADP(+)] (DPYD) of Bos taurus (Bovine).